We begin with the raw amino-acid sequence, 256 residues long: Mannose-specific lectin 1 (256 aa).

A signal peptide spans 1 to 23; the sequence is MAKLLLFLLPAILGLLVPRSAVA. 2 Bulb-type lectin domains span residues 26–131 and 145–252; these read TNYL…PWVR and NNLL…SKRS. Beta-D-mannose-binding positions include 51-55, tyrosine 59, tryptophan 63, glutamine 64, 170-174, tyrosine 178, and 182-185; these read QDDCN, QGDCN, and YGWQ. Positions 51–59 match the Carbohydrate-binding motif 1 motif; it reads QDDCNLVLY. Cystine bridges form between cysteine 54/cysteine 74 and cysteine 173/cysteine 195. The short motif at 170-178 is the Carbohydrate-binding motif 2 element; it reads QGDCNLVLY.

As to quaternary structure, forms heterodimers.

The protein resides in the secreted. Its function is as follows. Mannose-specific lectin. Shows agglutinating activity towards erythrocytes from rabbit. This chain is Mannose-specific lectin 1, found in Remusatia vivipara (Hitchhiker elephant ear).